A 334-amino-acid chain; its full sequence is Fructose-1,6-bisphosphatase class 1 (334 aa).

Residues E87, D106, L108, and D109 each coordinate Mg(2+). Residues 109 to 112, N208, and K274 each bind substrate; that span reads DGSS. A Mg(2+)-binding site is contributed by E280.

This sequence belongs to the FBPase class 1 family. As to quaternary structure, homotetramer. It depends on Mg(2+) as a cofactor.

Its subcellular location is the cytoplasm. The enzyme catalyses beta-D-fructose 1,6-bisphosphate + H2O = beta-D-fructose 6-phosphate + phosphate. The protein operates within carbohydrate biosynthesis; gluconeogenesis. This chain is Fructose-1,6-bisphosphatase class 1, found in Psychrobacter sp. (strain PRwf-1).